The primary structure comprises 140 residues: Mercuric transport protein MerC (140 aa).

Topologically, residues 2-10 (GLMTRIADK) are cytoplasmic. The chain crosses the membrane as a helical span at residues 11-31 (TGALGSVVSAMGCAACFPALA). Hg(2+) is bound by residues Gly-22 and Ala-25. Over 32–46 (SFGAAIGLGFLSQYE) the chain is Periplasmic. Residues 47–67 (GLFISRLLPLFAALAFLANAL) traverse the membrane as a helical segment. Over 68–78 (GWFSHRQWLRS) the chain is Cytoplasmic. A helical transmembrane segment spans residues 79-99 (LLGMIGPAIVFAATVWLLGNW). Over 100–106 (WTANLMY) the chain is Periplasmic. A helical membrane pass occupies residues 107–127 (VGLALMIGVSIWDFVSPAHRR). Residues 128-140 (CGPDGCELPAKRL) lie on the Cytoplasmic side of the membrane.

It localises to the cell inner membrane. Its activity is regulated as follows. Uptake of Hg(2+) is decreased by iodoacetamide and iodoacetate, and is completely inhibited by the thiol-modifying reagent N-ethylmaleimide (NEM). Involved in mercuric ion uptake and binding. MerC-mediated Hg(2+) uptake does not require MerP. This Shigella flexneri protein is Mercuric transport protein MerC.